Consider the following 703-residue polypeptide: Polyribonucleotide nucleotidyltransferase (703 aa).

Residues Asp485 and Asp491 each coordinate Mg(2+). Residues Pro552–Ile611 form the KH domain. Residues Gly621–Lys689 form the S1 motif domain.

The protein belongs to the polyribonucleotide nucleotidyltransferase family. It depends on Mg(2+) as a cofactor.

The protein resides in the cytoplasm. It catalyses the reaction RNA(n+1) + phosphate = RNA(n) + a ribonucleoside 5'-diphosphate. Its function is as follows. Involved in mRNA degradation. Catalyzes the phosphorolysis of single-stranded polyribonucleotides processively in the 3'- to 5'-direction. The sequence is that of Polyribonucleotide nucleotidyltransferase from Clostridium acetobutylicum (strain ATCC 824 / DSM 792 / JCM 1419 / IAM 19013 / LMG 5710 / NBRC 13948 / NRRL B-527 / VKM B-1787 / 2291 / W).